The primary structure comprises 237 residues: Ribitol-5-phosphate cytidylyltransferase (237 aa).

CTP-binding positions include 7–10 (LAGG), 81–87 (GSDRNES), and S112.

It belongs to the IspD/TarI cytidylyltransferase family. TarI subfamily.

It catalyses the reaction D-ribitol 5-phosphate + CTP + H(+) = CDP-L-ribitol + diphosphate. The protein operates within cell wall biogenesis; poly(ribitol phosphate) teichoic acid biosynthesis. Catalyzes the transfer of the cytidylyl group of CTP to D-ribitol 5-phosphate. This chain is Ribitol-5-phosphate cytidylyltransferase, found in Bacillus spizizenii (strain ATCC 23059 / NRRL B-14472 / W23) (Bacillus subtilis subsp. spizizenii).